A 149-amino-acid chain; its full sequence is Nucleoside diphosphate kinase (149 aa).

Residues lysine 9, phenylalanine 57, arginine 85, threonine 91, arginine 102, and asparagine 112 each coordinate ATP. The Pros-phosphohistidine intermediate role is filled by histidine 115.

The protein belongs to the NDK family. In terms of assembly, homotetramer. The cofactor is Mg(2+).

The protein resides in the cytoplasm. It carries out the reaction a 2'-deoxyribonucleoside 5'-diphosphate + ATP = a 2'-deoxyribonucleoside 5'-triphosphate + ADP. The catalysed reaction is a ribonucleoside 5'-diphosphate + ATP = a ribonucleoside 5'-triphosphate + ADP. In terms of biological role, major role in the synthesis of nucleoside triphosphates other than ATP. The ATP gamma phosphate is transferred to the NDP beta phosphate via a ping-pong mechanism, using a phosphorylated active-site intermediate. The polypeptide is Nucleoside diphosphate kinase (Cyanothece sp. (strain PCC 7425 / ATCC 29141)).